Consider the following 363-residue polypeptide: Guanine nucleotide-binding protein alpha-11 subunit (363 aa).

The region spanning 26-363 is the G-alpha domain; sequence KMLKILLLGG…KISMEKVGFM (338 aa). Residues 29 to 42 form a G1 motif region; that stretch reads KILLLGGPECGKST. GTP-binding positions include 34–41, 172–178, 197–201, 276–279, and alanine 335; these read GGPECGKS, LRARVPT, DVGGQ, and NKID. Mg(2+)-binding residues include serine 41 and threonine 178. The segment at 170–178 is G2 motif; it reads DVLRARVPT. Positions 193-202 are G3 motif; sequence LRMVDVGGQR. Positions 272-279 are G4 motif; it reads ILFLNKID. Residues 333–338 form a G5 motif region; sequence TNATDT.

The protein belongs to the G-alpha family. As to quaternary structure, g proteins are composed of 3 units; alpha, beta and gamma. The alpha chain contains the guanine nucleotide binding site. As to expression, expressed in ADL and ASH neurons.

In terms of biological role, guanine nucleotide-binding proteins (G proteins) are involved as modulators or transducers in various transmembrane signaling systems. Mediates the transduction of food and serotonin signals, which modulates the avoidance response to the odorant octanol. Has a role in lifespan to promote longevity. In Caenorhabditis elegans, this protein is Guanine nucleotide-binding protein alpha-11 subunit (gpa-11).